Reading from the N-terminus, the 70-residue chain is Turripeptide Gsp9.3 (70 aa).

Residues methionine 1–glycine 20 form the signal peptide. In terms of domain architecture, Kazal-like spans glutamine 21–cysteine 70. 3 disulfide bridges follow: cysteine 26/cysteine 56, cysteine 30/cysteine 49, and cysteine 38/cysteine 70.

Belongs to the conopeptide P-like superfamily. As to expression, expressed by the venom duct.

It localises to the secreted. Acts as a neurotoxin by inhibiting an ion channel. May also act as a serine protease inhibitor, since it possess the kazal serine protease inhibitor signature. The sequence is that of Turripeptide Gsp9.3 from Gemmula speciosa (Splendid gem-turris).